We begin with the raw amino-acid sequence, 551 residues long: Palmdelphin (551 aa).

Residue Met-1 is modified to N-acetylmethionine. Residues Gln-12–Ile-106 adopt a coiled-coil conformation. A Glycyl lysine isopeptide (Lys-Gly) (interchain with G-Cter in SUMO2) cross-link involves residue Lys-125. Residue Ser-135 is modified to Phosphoserine. Lys-179 participates in a covalent cross-link: Glycyl lysine isopeptide (Lys-Gly) (interchain with G-Cter in SUMO1); alternate. Residue Lys-179 forms a Glycyl lysine isopeptide (Lys-Gly) (interchain with G-Cter in SUMO2); alternate linkage. Residues Glu-248–Glu-259 show a composition bias toward basic and acidic residues. The disordered stretch occupies residues Glu-248–Gly-280. Positions Thr-270 to Gly-280 are enriched in polar residues. Thr-271 carries the phosphothreonine modification. Ser-321, Ser-370, Ser-384, and Ser-385 each carry phosphoserine. 2 disordered regions span residues Thr-342–Glu-392 and Asp-449–Ser-535. Positions Lys-484–Asn-495 are enriched in basic and acidic residues. A phosphoserine mark is found at Ser-498, Ser-515, and Ser-520.

This sequence belongs to the paralemmin family. In terms of assembly, interacts with GLUL. In terms of processing, phosphorylated. Ubiquitous. Most abundant in cardiac and skeletal muscle.

The protein localises to the cytoplasm. Its subcellular location is the cell projection. The protein resides in the dendrite. It localises to the dendritic spine. This chain is Palmdelphin (PALMD), found in Homo sapiens (Human).